The chain runs to 1107 residues: Rho GTPase-activating protein 39 (1107 aa).

The tract at residues 1–21 (MSQAQDYECRSHHVDEQEPRI) is disordered. Serine 2 is subject to N-acetylserine. Over residues 7–19 (YECRSHHVDEQEP) the composition is skewed to basic and acidic residues. 2 WW domains span residues 25 to 58 (STRL…PPAG) and 63 to 97 (RTSE…RPQN). Polar residues predominate over residues 111–122 (QNTESPRASADN). Disordered stretches follow at residues 111–173 (QNTE…PPGV), 218–267 (PSFL…PERR), 282–311 (SPLL…LYEE), and 326–370 (MDVQ…LMRT). The segment covering 123-136 (SPGRGSRDGSTGSS) has biased composition (low complexity). Residues 242–254 (SGSQHSPNLQTFV) show a composition bias toward polar residues. Phosphoserine is present on serine 282. 2 stretches are compositionally biased toward polar residues: residues 331 to 343 (EANS…SPQR) and 353 to 369 (LQTT…QLMR). Residues serine 380, serine 384, serine 402, and serine 403 each carry the phosphoserine modification. 3 disordered regions span residues 404 to 429 (PKLR…QPSP), 441 to 529 (SGDY…RASL), and 563 to 585 (MKQR…GAVP). Polar residues predominate over residues 470–484 (SWSSQQDTMSSTGYS). Phosphoserine is present on residues serine 597, serine 683, serine 708, and serine 719. The MyTH4 domain maps to 715–867 (WSSESIKKPM…PYVEEPDGVA (153 aa)). Positions 914-1102 (SALQEVMSMQ…VLIQHLDTSF (189 aa)) constitute a Rho-GAP domain.

It localises to the nucleus. In Mus musculus (Mouse), this protein is Rho GTPase-activating protein 39 (Arhgap39).